A 232-amino-acid polypeptide reads, in one-letter code: Aspartate racemase (232 aa).

D49–T51 contacts substrate. The active-site Proton donor/acceptor is the C84. Substrate-binding positions include N85–A87 and K166. C195 functions as the Proton donor/acceptor in the catalytic mechanism.

The protein belongs to the aspartate/glutamate racemases family.

The enzyme catalyses L-aspartate = D-aspartate. This chain is Aspartate racemase, found in Thermococcus sp. (strain KS-8).